The sequence spans 407 residues: GTPase Obg (407 aa).

The Obg domain maps to 1–159 (MKFVDEVSIR…RDLKLELKVL (159 aa)). Residues 127–149 (NTRFKSSTNRAPRQTTPGKPGDQ) form a disordered region. The span at 129 to 143 (RFKSSTNRAPRQTTP) shows a compositional bias: polar residues. The 174-residue stretch at 160–333 (ADVGLLGLPN…LTRDIMRYLE (174 aa)) folds into the OBG-type G domain. GTP is bound by residues 166–173 (GLPNAGKS), 191–195 (FTTLV), 213–216 (DIPG), 283–286 (NKCD), and 314–316 (SAI). Mg(2+)-binding residues include serine 173 and threonine 193. Positions 376–407 (SGVKSVHDIGDDDWDEEDVDDEDGPEIIYVRD) are disordered. Residues 385 to 400 (GDDDWDEEDVDDEDGP) are compositionally biased toward acidic residues.

This sequence belongs to the TRAFAC class OBG-HflX-like GTPase superfamily. OBG GTPase family. Monomer. It depends on Mg(2+) as a cofactor.

Its subcellular location is the cytoplasm. Functionally, an essential GTPase which binds GTP, GDP and possibly (p)ppGpp with moderate affinity, with high nucleotide exchange rates and a fairly low GTP hydrolysis rate. Plays a role in control of the cell cycle, stress response, ribosome biogenesis and in those bacteria that undergo differentiation, in morphogenesis control. This Pseudomonas savastanoi pv. phaseolicola (strain 1448A / Race 6) (Pseudomonas syringae pv. phaseolicola (strain 1448A / Race 6)) protein is GTPase Obg.